A 607-amino-acid chain; its full sequence is Putative pentatricopeptide repeat-containing protein At1g09680 (607 aa).

PPR repeat units lie at residues 239 to 273 (NVYVFNILMNKFCKEGNISDAQKVFDEITKRSLQP), 274 to 308 (TVVSFNTLINGYCKVGNLDEGFRLKHQMEKSRTRP), 309 to 343 (DVFTYSALINALCKENKMDGAHGLFDEMCKRGLIP), 344 to 378 (NDVIFTTLIHGHSRNGEIDLMKESYQKMLSKGLQP), 379 to 413 (DIVLYNTLVNGFCKNGDLVAARNIVDGMIRRGLRP), 414 to 448 (DKITYTTLIDGFCRGGDVETALEIRKEMDQNGIEL), 449 to 483 (DRVGFSALVCGMCKEGRVIDAERALREMLRAGIKP), 484 to 518 (DDVTYTMMMDAFCKKGDAQTGFKLLKEMQSDGHVP), and 519 to 553 (SVVTYNVLLNGLCKLGQMKNADMLLDAMLNIGVVP).

Belongs to the PPR family. P subfamily.

The polypeptide is Putative pentatricopeptide repeat-containing protein At1g09680 (Arabidopsis thaliana (Mouse-ear cress)).